A 2476-amino-acid polypeptide reads, in one-letter code: MTAEPMSGNKLSTLVQKLHDFLAHSSEESEETCSSPRLVMNQSTDKICGSGLNSDMMENNKEEGASTSEKSRSSGSSRSKRKPSIVTKYVESDDEKPTDENVNEKAATENSENDITMQSLPKGTVIVQPEPVLNEDKDDFKGPEFRSRSKMKADNLKKRGEDGLHGIVSCTACGQQVNHFQKDSIYRHPSLKVLICKNCFKYYMSDDISRDSDGMDEQCRWCAEGGNLICCDFCHNAFCKKCILRNLGRKELSTIMDENNQWYCYICQPEPLLDLVTACNSVFENLEQLLQQNKKKIKVDSEKTSKVCDQTSKFSPKKSSSSCNGEEKKLEESCSGSVSSTYSHSALSVPKEMIKKTTKLIETTSNMNSSYIKFLKQAADNSEMTSAMKLCQLKSFKSVLDDIKKAHLALEEDLNSEIQALDDVHKEKNTKDLKSTDAKSETKLGKGEKSYSTEKREFLKLDARSSVKAIDGEEQRAHKSTSGEHKGSGRKDGSQYEPTNTPEDLDMDIVSVPSSVPEDIFDSLESAMEVQSSADYQGDGNSGTEPELESSSVKLNVSSKDSRGNIKSKVTAKVRKELFVKLTPVSLSNSPIKGVDCQEVSQEKNGRKSSGVARSSEKCRPREEISDHENNVTILLEDSDLRRSPRVKTTPLRRQTESNPAMSNSDEESNGTMKEKQKMSGPIRKKDKRNSADCATDNPKPHKVPKAKQPVIGDQNSDSDEMLAVLKEASQMGHSSSSDTDINEPQMNHKGKTGKDDNGKRKRKNSTSGSDFDTKKGKSTETSIISKKKRQNYSESSNYDSELEREIKTMSRIGAARKSVPEKKEEDSSEDEKQGKKVVDNGGHERAKTTQEGSSADDTGDTEGRQGGSCSIAGGSIEKVRSGVEFREMLCKPGVSSDGAEKPSVKEENVNSPEDKRVSKTKEKTKHLRSRQSRKGKGGSSDGTDRFPKKEQSDESSEGEKKQSRQRPGTKGKKAPDLKGETLKREQEWDSSSDGTERLPEEEEIGPFSKGIKQSKTDTAGGEKKGKKWKDKSCEKKEELSDSVDKLPGKGDSCDSSEDKKTRNRVSLREKKRFSLPAKSPGKRPECSSSDTEKSLKGQCCDSTEKRPKRIDLRERRNSSSKRNTKEVKSASSSSDAEGSSEDNKKQKKQRTSAKKKTGNTKEKKRNSLRATPKRKQVDITSSSSDIGDDDQNSAGEESSDEQKIKPVTENLVLPSHTGFCQSSGDEALSKSVPATVDDDDDDNDPENRIAKKMLLEEIKANLSSDEDGSSDDEPDGGGKKRIGKQSEESPADDGELRREQLAVNQVNSESDSDSEESKKPRYRHRLLRHKLTLSDGESGEEKPTKPKEHKEAKGRNRRKVSSEDSEDTDFQESGVSEEVSESEDEQRPRTRSAKKAELEENQRSYKQKKKRRRIKVQEDSSSENKSHSEEDKKEGDEEDEEDEDEDEEDENDDSKSPGKGRKKIRKILKDDKLRTETQNALKEEEERRKRIAEREREREKLREVIEIEDASPTKCPITTKLVLDENEETKEPLVQVHRNMVIKLKPHQVDGVQFMWDCCCESVEKTKKSPGSGCILAHCMGLGKTLQVVSFLHTVLLCDKLDFSTALVVCPLNTALNWMNEFEKWQEGLNDNEKLEVSELATVKRPQERSYMLQRWQEDGGVMIIGYEMYRNLAQGRNVKSRKLKDIFNKALVDPGPDFVVCDEGHILKNEASAVSKAMNSIKSRRRIILTGTPLQNNLIEYHCMVNFIKENLLGSIKEFRNRFINPIQNGQCADSTMVDVRVMKKRAHILYEMLAGCVQRKDYTALTKFLPPKHEYVLAVRMTAIQCKLYQYYLDHLTGVGNSTEGGRGKAGAKLFQDFQMLSRIWTHPWCLQLDYISKENKGYFDEDSMDEFIASDSDETSKSLSSDEKKKPKGKKGKKDSSSSGSGSDNDVEVIKVWNSRSRGGGDGNVDDTGNNPSVSLKLDESKTTSTSNPSSPAPDWYKDFVTDTDAEVLEHSGKMVLLFEILRMAEEIGDKVLVFSQSLISLDLIEDFLELASREKTEDKEKPLIYKGEGKWIRNIDYYRLDGSTNAQSRKKWAEEFNDETNVRGRLFIISTKAGSLGINLVAANRVIIFDASWNPSYDIQSIFRVYRFGQTKPVYVYRFLAQGTMEDKIYDRQVTKQSLSFRVVDQQQVERHFTMNELTELYTFEPDLLDDPNSEKKKKRDTPMLPKDTILAELLQIHKEHIVGYHEHDSLLDHKEEEELTEEERKAAWAEYEAEKKGLTMRFNIPTGTNLPPVTFTSQTPYIPFNLGALSAMSNQQLEDLINQGREKVVEATNSMTAVRIQPLEDIISTVWKENMNLSEAQVQALALSRQASQELDVKRREAIYNDVLTKQQMLINCVQRILMNRRLQQQYTQQQQQQLTYQQATLSHLMMPKPPNLIMTPSNYQQIDMRGMYQSVAGGMQPPPLQRAPPPTVRSKNPGPSPGKSM.

A Glycyl lysine isopeptide (Lys-Gly) (interchain with G-Cter in SUMO2) cross-link involves residue Lys-10. The disordered stretch occupies residues 24–154 (HSSEESEETC…FRSRSKMKAD (131 aa)). Residues Ser-25 and Ser-34 each carry the phosphoserine modification. Over residues 40-57 (MNQSTDKICGSGLNSDMM) the composition is skewed to polar residues. Over residues 58–72 (ENNKEEGASTSEKSR) the composition is skewed to basic and acidic residues. A Phosphotyrosine modification is found at Tyr-89. Ser-92 is subject to Phosphoserine. Basic and acidic residues predominate over residues 98 to 107 (TDENVNEKAA). The span at 108–121 (TENSENDITMQSLP) shows a compositional bias: polar residues. Ser-111 carries the phosphoserine modification. The segment covering 134-154 (NEDKDDFKGPEFRSRSKMKAD) has biased composition (basic and acidic residues). Glycyl lysine isopeptide (Lys-Gly) (interchain with G-Cter in SUMO2) cross-links involve residues Lys-137 and Lys-141. The ADD domain maps to 158-295 (KRGEDGLHGI…LEQLLQQNKK (138 aa)). The GATA-type; atypical zinc finger occupies 169–205 (SCTACGQQVNHFQKDSIYRHPSLKVLICKNCFKYYMS). Residue Ser-212 is modified to Phosphoserine. The PHD-type; atypical zinc finger occupies 216 to 271 (DEQCRWCAEGGNLICCDFCHNAFCKKCILRNLGRKELSTIMDENNQWYCYICQPEP). Lys-298 participates in a covalent cross-link: Glycyl lysine isopeptide (Lys-Gly) (interchain with G-Cter in SUMO2). A Phosphoserine modification is found at Ser-315. Disordered stretches follow at residues 427-451 (EKNTKDLKSTDAKSETKLGKGEKSY), 466-507 (SVKA…DLDM), and 525-568 (ESAM…NIKS). Lys-439 participates in a covalent cross-link: Glycyl lysine isopeptide (Lys-Gly) (interchain with G-Cter in SUMO2). The segment covering 466–494 (SVKAIDGEEQRAHKSTSGEHKGSGRKDGS) has biased composition (basic and acidic residues). The span at 549 to 559 (ESSSVKLNVSS) shows a compositional bias: polar residues. The PxVxL motif motif lies at 573–586 (KVRKELFVKLTPVS). Thr-583 bears the Phosphothreonine mark. Disordered stretches follow at residues 585–877 (VSLS…GGSI) and 893–1464 (PGVS…GRKK). Phosphoserine occurs at positions 586, 590, 626, 663, 665, 717, and 719. Over residues 615–630 (SSEKCRPREEISDHEN) the composition is skewed to basic and acidic residues. Polar residues predominate over residues 732 to 746 (MGHSSSSDTDINEPQ). 7 positions are modified to phosphoserine: Ser-766, Ser-801, Ser-828, Ser-829, Ser-854, Ser-855, and Ser-871. Positions 819 to 849 (SVPEKKEEDSSEDEKQGKKVVDNGGHERAKT) are enriched in basic and acidic residues. Positions 899–922 (GAEKPSVKEENVNSPEDKRVSKTK) are enriched in basic and acidic residues. Basic residues predominate over residues 923–937 (EKTKHLRSRQSRKGK). A phosphoserine mark is found at Ser-941 and Ser-953. Positions 943–963 (GTDRFPKKEQSDESSEGEKKQ) are enriched in basic and acidic residues. Residues 964–973 (SRQRPGTKGK) show a composition bias toward basic residues. The segment covering 974–988 (KAPDLKGETLKREQE) has biased composition (basic and acidic residues). Lys-984 is covalently cross-linked (Glycyl lysine isopeptide (Lys-Gly) (interchain with G-Cter in SUMO2)). 4 positions are modified to phosphoserine: Ser-991, Ser-992, Ser-993, and Ser-1041. The span at 1031–1061 (DKSCEKKEELSDSVDKLPGKGDSCDSSEDKK) shows a compositional bias: basic and acidic residues. The segment covering 1062–1074 (TRNRVSLREKKRF) has biased composition (basic residues). Arg-1063 bears the Citrulline mark. Basic and acidic residues-rich tracts occupy residues 1083-1096 (KRPECSSSDTEKSL) and 1103-1129 (STEKRPKRIDLRERRNSSSKRNTKEVK). The span at 1146–1175 (KQKKQRTSAKKKTGNTKEKKRNSLRATPKR) shows a compositional bias: basic residues. Positions 1169–1313 (LRATPKRKQV…VNQVNSESDS (145 aa)) are interaction with DAXX. A phosphoserine mark is found at Ser-1223, Ser-1224, and Ser-1232. A compositionally biased stretch (basic and acidic residues) spans 1246-1260 (PENRIAKKMLLEEIK). Acidic residues predominate over residues 1265–1276 (SDEDGSSDDEPD). Phosphoserine is present on residues Ser-1309, Ser-1311, and Ser-1313. The span at 1321 to 1332 (PRYRHRLLRHKL) shows a compositional bias: basic residues. Phosphoserine occurs at positions 1335 and 1339. 2 stretches are compositionally biased toward basic and acidic residues: residues 1340-1355 (GEEKPTKPKEHKEAKG) and 1395-1404 (KKAELEENQR). Residues 1406-1415 (YKQKKKRRRI) show a composition bias toward basic residues. The segment covering 1416-1436 (KVQEDSSSENKSHSEEDKKEG) has biased composition (basic and acidic residues). The span at 1437–1453 (DEEDEEDEDEDEEDEND) shows a compositional bias: acidic residues. Residue Lys-1473 forms a Glycyl lysine isopeptide (Lys-Gly) (interchain with G-Cter in SUMO2) linkage. Phosphoserine is present on Ser-1512. Thr-1514 bears the Phosphothreonine mark. The Helicase ATP-binding domain maps to 1566 to 1753 (KTKKSPGSGC…HCMVNFIKEN (188 aa)). 1579–1586 (HCMGLGKT) is a binding site for ATP. The DEGH box motif lies at 1704 to 1707 (DEGH). 2 positions are modified to phosphoserine: Ser-1891 and Ser-1898. The interval 1898–1982 (SDSDETSKSL…STSNPSSPAP (85 aa)) is disordered. Basic and acidic residues predominate over residues 1902–1913 (ETSKSLSSDEKK). Lys-1965 participates in a covalent cross-link: Glycyl lysine isopeptide (Lys-Gly) (interchain with G-Cter in SUMO1); alternate. Residue Lys-1965 forms a Glycyl lysine isopeptide (Lys-Gly) (interchain with G-Cter in SUMO2); alternate linkage. Lys-1970 participates in a covalent cross-link: Glycyl lysine isopeptide (Lys-Gly) (interchain with G-Cter in SUMO2). The span at 1971-1982 (TTSTSNPSSPAP) shows a compositional bias: low complexity. Phosphoserine occurs at positions 1975 and 1979. The tract at residues 1993 to 2263 (DAEVLEHSGK…RKAAWAEYEA (271 aa)) is interaction with MECP2. Residues 2008-2188 (EILRMAEEIG…ERHFTMNELT (181 aa)) enclose the Helicase C-terminal domain. The residue at position 2203 (Ser-2203) is a Phosphoserine. Residues 2445–2476 (SVAGGMQPPPLQRAPPPTVRSKNPGPSPGKSM) form a disordered region. The segment covering 2451 to 2462 (QPPPLQRAPPPT) has biased composition (pro residues). Arg-2457 and Arg-2464 each carry omega-N-methylarginine.

The protein belongs to the SNF2/RAD54 helicase family. Interacts with DAXX to form the chromatin remodeling complex ATRX:DAXX. Probably binds EZH2. Binds annexin V in a calcium and phosphatidylcholine/phosphatidylserine-dependent manner. Interacts directly with CBX5 via the PxVxL motif. Interacts with RAD50, MRE11 and NBN; indicative for an association with the MRN complex. Interacts with histone MACROH2A1. Interacts with histone H3 peptides methylated at 'Lys-10' with preferences H3K9me3 &gt; H3K9me2 &gt; H3K9me1. Interacts with histone H3 peptides unmethylated at 'Lys-5' (H3K4me0). Interacts with MECP2, SMC1 and SMC3. Interacts with SETDB1, TRIM28 and ZNF274. Post-translationally, citrullinated by PADI4.

The protein localises to the nucleus. It localises to the chromosome. The protein resides in the telomere. Its subcellular location is the PML body. It catalyses the reaction ATP + H2O = ADP + phosphate + H(+). Its function is as follows. Involved in transcriptional regulation and chromatin remodeling. Facilitates DNA replication in multiple cellular environments and is required for efficient replication of a subset of genomic loci. Binds to DNA tandem repeat sequences in both telomeres and euchromatin and in vitro binds DNA quadruplex structures. May help stabilizing G-rich regions into regular chromatin structures by remodeling G4 DNA and incorporating H3.3-containing nucleosomes. Catalytic component of the chromatin remodeling complex ATRX:DAXX which has ATP-dependent DNA translocase activity and catalyzes the replication-independent deposition of histone H3.3 in pericentric DNA repeats outside S-phase and telomeres, and the in vitro remodeling of H3.3-containing nucleosomes. Its heterochromatin targeting is proposed to involve a combinatorial readout of histone H3 modifications (specifically methylation states of H3K9 and H3K4) and association with CBX5. Involved in maintaining telomere structural integrity in embryonic stem cells probably implying recruitment of CBX5 to telomeres. Reports on the involvement in transcriptional regulation of telomeric repeat-containing RNA (TERRA) are conflicting; according is required for its transcriptional repression in embryonic stem cells. Acts as a negative regulator of chromatin incorporation of transcriptionally repressive histone MACROH2A1, particularily at telomeres. Participates in the allele-specific gene expression at the imprinted IGF2/H19 gene locus. On the maternal allele, required for the chromatin occupancy of SMC1 and CTCTF within the H19 imprinting control region (ICR) and involved in esatblishment of histone tails modifications in the ICR. Binds to zinc-finger coding genes with atypical chromatin signatures and regulates its H3K9me3 levels. Forms a complex with ZNF274, TRIM28 and SETDB1 to facilitate the deposition and maintenance of H3K9me3 at the 3' exons of zinc-finger genes. The polypeptide is Transcriptional regulator ATRX (Atrx) (Mus musculus (Mouse)).